We begin with the raw amino-acid sequence, 132 residues long: Transmembrane protein 170B (132 aa).

Over 1-37 (MKAEGGDHSMINLSVQQVLSLWAHGTVLRNLTEMWYW) the chain is Extracellular. N12 is a glycosylation site (N-linked (GlcNAc...) asparagine). Residues 38–58 (IFLWALFSSLFVHGAAGVLMF) traverse the membrane as a helical segment. Residues 59 to 68 (VMLQRHRQGR) lie on the Cytoplasmic side of the membrane. The chain crosses the membrane as a helical span at residues 69-89 (VISVIAVSIGFLASVTGAMIT). At 90 to 104 (SAAVAGIYRVAGKNM) the chain is on the extracellular side. Residues 105 to 125 (APLEALVWGVGQTVLTLIISF) form a helical membrane-spanning segment. Over 126–132 (SRILATL) the chain is Cytoplasmic.

Belongs to the TMEM170 family. Interacts with CTNNB1. As to expression, expressed in normal breast tissues. Down-regulated in breast cancer cells (at protein level).

It is found in the cell membrane. Functionally, negatively regulates the canonical Wnt signaling in breast cancer cells. Exerts an inhibitory effect on breast cancer growth by inhibiting CTNNB1 stabilization and nucleus translocation, which reduces the activity of Wnt targets. This chain is Transmembrane protein 170B (TMEM170B), found in Homo sapiens (Human).